The sequence spans 408 residues: MDRLNQLSGQLKPNAKQSILQKNPDDVVIVAAYRTAIGKGFKGSFRNVHSEFILTEFLKEFIKKTNIDPSLIEDVAIGNVLNQAAGATEHRGACLAAGIPYTAAFIAVNRFCSSGLMAISDIANKIKTGEIECGLAGGAESMSTNYRDPRVAPRIDPHLADDAQMEKCLIPMGITNENVANQFNISRERQDEFAAKSYNKAAKAVASGAFKSEILPIRSIIRNSDGTEKEIIVDTDEGPREGVTAESLGKLRPAFDGTTTAGNASQVSDGAAAVLLMKRSLAEAKGYPIIGKYVLCSTAGVPPEIMGVGPAFAIPEVLKRTGLTVDDIDVFEINEAFAAQCLYSAEQVNVPEEKLNINGGAIALGHPLGETGARQYATIIPLLKPGQIGLTSMCIGSGMGSASILVRE.

C112 serves as the catalytic Acyl-thioester intermediate. Catalysis depends on proton acceptor residues H366 and C394.

It belongs to the thiolase-like superfamily. Thiolase family. As to quaternary structure, homodimer.

The protein localises to the peroxisome. The catalysed reaction is an acyl-CoA + acetyl-CoA = a 3-oxoacyl-CoA + CoA. The protein operates within lipid metabolism; fatty acid metabolism. In Candida tropicalis (Yeast), this protein is 3-ketoacyl-CoA thiolase B, peroxisomal.